The sequence spans 115 residues: NADH-ubiquinone oxidoreductase chain 3 (115 aa).

The next 3 membrane-spanning stretches (helical) occupy residues 3–23, 55–75, and 84–104; these read LLLT…IAFW, FFLV…LLPL, and LNTM…SLAY.

The protein belongs to the complex I subunit 3 family. As to quaternary structure, core subunit of respiratory chain NADH dehydrogenase (Complex I) which is composed of 45 different subunits. Interacts with TMEM186. Interacts with TMEM242.

It is found in the mitochondrion inner membrane. It catalyses the reaction a ubiquinone + NADH + 5 H(+)(in) = a ubiquinol + NAD(+) + 4 H(+)(out). Functionally, core subunit of the mitochondrial membrane respiratory chain NADH dehydrogenase (Complex I) which catalyzes electron transfer from NADH through the respiratory chain, using ubiquinone as an electron acceptor. Essential for the catalytic activity of complex I. This chain is NADH-ubiquinone oxidoreductase chain 3, found in Balaenoptera musculus (Blue whale).